We begin with the raw amino-acid sequence, 139 residues long: uncharacterized protein (139 aa).

The segment at asparagine 54–serine 75 is disordered.

This is an uncharacterized protein from Homo sapiens (Human).